The primary structure comprises 712 residues: Polyribonucleotide nucleotidyltransferase (712 aa).

Positions 493 and 499 each coordinate Mg(2+). The KH domain maps to 560 to 619 (PRLLTFKVDPEDIGKIIGPGGKMVRSITEATGAKVDISDDGTITVSSSVGGQAEAARAMI). Residues 629 to 697 (GQVYLGKVTR…HKGRVNLTRL (69 aa)) form the S1 motif domain.

This sequence belongs to the polyribonucleotide nucleotidyltransferase family. The cofactor is Mg(2+).

It localises to the cytoplasm. The catalysed reaction is RNA(n+1) + phosphate = RNA(n) + a ribonucleoside 5'-diphosphate. In terms of biological role, involved in mRNA degradation. Catalyzes the phosphorolysis of single-stranded polyribonucleotides processively in the 3'- to 5'-direction. The protein is Polyribonucleotide nucleotidyltransferase of Synechococcus sp. (strain JA-3-3Ab) (Cyanobacteria bacterium Yellowstone A-Prime).